The chain runs to 363 residues: Fructose-1,6-bisphosphatase 1 (363 aa).

Val-2 carries the post-translational modification N-acetylvaline. AMP is bound by residues 18–22 and 28–32; these read VLEEG and TGEMT. Mg(2+)-binding residues include Asp-69 and Glu-98. Residue 113 to 114 coordinates AMP; the sequence is KY. Residues Asp-119, Leu-121, and Asp-122 each contribute to the Mg(2+) site. Residue 122 to 125 participates in substrate binding; sequence DGSS. Arg-141 serves as a coordination point for AMP. The residue at position 151 (Lys-151) is an N6-succinyllysine. Substrate-binding positions include 213–216, 244–249, Tyr-265, and 275–277; these read NEGY, RYVGSM, and KLR. Residues Tyr-216, Tyr-245, and Tyr-265 each carry the phosphotyrosine modification. Glu-281 is a binding site for Mg(2+). Phosphoserine occurs at positions 339 and 353.

Belongs to the FBPase class 1 family. In terms of assembly, homotetramer. Mg(2+) is required as a cofactor.

It catalyses the reaction beta-D-fructose 1,6-bisphosphate + H2O = beta-D-fructose 6-phosphate + phosphate. Its pathway is carbohydrate biosynthesis; gluconeogenesis. With respect to regulation, subject to complex allosteric regulation. The enzyme can assume an active R-state, or an inactive T-state. Intermediate conformations may exist. AMP acts as an allosteric inhibitor. AMP binding affects the turnover of bound substrate and not the affinity for substrate. Fructose 2,6-bisphosphate acts as a competitive inhibitor. Fructose 2,6-bisphosphate and AMP have synergistic effects. Catalyzes the hydrolysis of fructose 1,6-bisphosphate to fructose 6-phosphate in the presence of divalent cations, acting as a rate-limiting enzyme in gluconeogenesis. Plays a role in regulating glucose sensing and insulin secretion of pancreatic beta-cells. Appears to modulate glycerol gluconeogenesis in liver. Important regulator of appetite and adiposity; increased expression of the protein in liver after nutrient excess increases circulating satiety hormones and reduces appetite-stimulating neuropeptides and thus seems to provide a feedback mechanism to limit weight gain. This Rattus norvegicus (Rat) protein is Fructose-1,6-bisphosphatase 1 (Fbp1).